The primary structure comprises 274 residues: Beta-lysine N(6)-acetyltransferase (274 aa).

In terms of domain architecture, N-acetyltransferase spans 123–274; that stretch reads FHLKIANETD…DMNFWYKLSE (152 aa).

The protein belongs to the acetyltransferase family.

The enzyme catalyses (3S)-3,6-diaminohexanoate + acetyl-CoA = (3S)-6-acetamido-3-aminohexanoate + CoA + H(+). Catalyzes the acetylation of beta-lysine to N6-acetyl-beta-lysine, a compatible solute produced by methanogenic archaea that helps cells to cope with salt stress. In Methanococcus maripaludis (strain DSM 14266 / JCM 13030 / NBRC 101832 / S2 / LL), this protein is Beta-lysine N(6)-acetyltransferase.